We begin with the raw amino-acid sequence, 451 residues long: Bifunctional protein GlmU (451 aa).

The interval 1–229 (MQRHAIILAA…FDEIIGVNDR (229 aa)) is pyrophosphorylase. Residues 8–11 (LAAG), lysine 22, glutamine 72, and 77–78 (GT) contribute to the UDP-N-acetyl-alpha-D-glucosamine site. Aspartate 102 is a Mg(2+) binding site. UDP-N-acetyl-alpha-D-glucosamine is bound by residues glycine 139, glutamate 154, and asparagine 227. Asparagine 227 is a Mg(2+) binding site. The tract at residues 230-250 (LMLSEAEKALQQRINRYHMEN) is linker. The interval 251–451 (GVTIIDPSST…QVNKEGYLKK (201 aa)) is N-acetyltransferase. UDP-N-acetyl-alpha-D-glucosamine contacts are provided by arginine 332 and lysine 350. Histidine 362 serves as the catalytic Proton acceptor. UDP-N-acetyl-alpha-D-glucosamine-binding residues include tyrosine 365 and asparagine 376. Residues 385 to 386 (NY), alanine 422, and arginine 439 contribute to the acetyl-CoA site.

The protein in the N-terminal section; belongs to the N-acetylglucosamine-1-phosphate uridyltransferase family. It in the C-terminal section; belongs to the transferase hexapeptide repeat family. In terms of assembly, homotrimer. Requires Mg(2+) as cofactor.

Its subcellular location is the cytoplasm. The catalysed reaction is alpha-D-glucosamine 1-phosphate + acetyl-CoA = N-acetyl-alpha-D-glucosamine 1-phosphate + CoA + H(+). It carries out the reaction N-acetyl-alpha-D-glucosamine 1-phosphate + UTP + H(+) = UDP-N-acetyl-alpha-D-glucosamine + diphosphate. Its pathway is nucleotide-sugar biosynthesis; UDP-N-acetyl-alpha-D-glucosamine biosynthesis; N-acetyl-alpha-D-glucosamine 1-phosphate from alpha-D-glucosamine 6-phosphate (route II): step 2/2. The protein operates within nucleotide-sugar biosynthesis; UDP-N-acetyl-alpha-D-glucosamine biosynthesis; UDP-N-acetyl-alpha-D-glucosamine from N-acetyl-alpha-D-glucosamine 1-phosphate: step 1/1. It functions in the pathway bacterial outer membrane biogenesis; LPS lipid A biosynthesis. Functionally, catalyzes the last two sequential reactions in the de novo biosynthetic pathway for UDP-N-acetylglucosamine (UDP-GlcNAc). The C-terminal domain catalyzes the transfer of acetyl group from acetyl coenzyme A to glucosamine-1-phosphate (GlcN-1-P) to produce N-acetylglucosamine-1-phosphate (GlcNAc-1-P), which is converted into UDP-GlcNAc by the transfer of uridine 5-monophosphate (from uridine 5-triphosphate), a reaction catalyzed by the N-terminal domain. This Staphylococcus epidermidis protein is Bifunctional protein GlmU.